The sequence spans 313 residues: L-lactate dehydrogenase 1 (313 aa).

4 residues coordinate NAD(+): V15, D36, R41, and Y66. Substrate is bound by residues Q83, R89, and 121–124 (NPVD). NAD(+) contacts are provided by residues 119 to 121 (ASN) and S144. 149–152 (DTAR) contributes to the substrate binding site. The beta-D-fructose 1,6-bisphosphate site is built by R154 and H169. H176 (proton acceptor) is an active-site residue. Y218 bears the Phosphotyrosine mark. T227 serves as a coordination point for substrate.

It belongs to the LDH/MDH superfamily. LDH family. As to quaternary structure, homotetramer.

Its subcellular location is the cytoplasm. It catalyses the reaction (S)-lactate + NAD(+) = pyruvate + NADH + H(+). Its pathway is fermentation; pyruvate fermentation to lactate; (S)-lactate from pyruvate: step 1/1. Allosterically activated by fructose 1,6-bisphosphate (FBP). Functionally, catalyzes the conversion of lactate to pyruvate. This Listeria innocua serovar 6a (strain ATCC BAA-680 / CLIP 11262) protein is L-lactate dehydrogenase 1.